We begin with the raw amino-acid sequence, 585 residues long: Pyruvate kinase (585 aa).

Residue arginine 32 participates in substrate binding. The K(+) site is built by asparagine 34, serine 36, aspartate 66, and threonine 67. An ATP-binding site is contributed by 34 to 37; sequence NFSH. Residues arginine 73 and lysine 156 each coordinate ATP. A Mg(2+)-binding site is contributed by glutamate 221. The substrate site is built by glycine 244, aspartate 245, and threonine 277. Aspartate 245 is a binding site for Mg(2+).

It belongs to the pyruvate kinase family. The protein in the C-terminal section; belongs to the PEP-utilizing enzyme family. Mg(2+) serves as cofactor. The cofactor is K(+).

It catalyses the reaction pyruvate + ATP = phosphoenolpyruvate + ADP + H(+). It functions in the pathway carbohydrate degradation; glycolysis; pyruvate from D-glyceraldehyde 3-phosphate: step 5/5. This is Pyruvate kinase (pyk) from Staphylococcus aureus (strain bovine RF122 / ET3-1).